The sequence spans 166 residues: Disulfide bond formation protein B (166 aa).

The Cytoplasmic segment spans residues 1–11 (MCNKLFAGRRG). A helical transmembrane segment spans residues 12 to 28 (YFLGFVASFGLVGLALF). At 29-46 (LQQKYNLEPCPLCISQRI) the chain is on the periplasmic side. Cys-38 and Cys-41 form a disulfide bridge. Residues 47-63 (AFMALGILFLLAALHNP) form a helical membrane-spanning segment. The Cytoplasmic portion of the chain corresponds to 64–69 (GRVGRK). The chain crosses the membrane as a helical span at residues 70-87 (VYGLLHVIAAATGIGIAA). Over 88-144 (RHIWIQANPDKVMAECGAGFDYIMETFPLKKALDLIFKGTGECSAIDWTLFGLTIPQ) the chain is Periplasmic. The cysteines at positions 103 and 130 are disulfide-linked. Residues 145–163 (LSLIAFVGLGLFAVLLAFH) form a helical membrane-spanning segment. Residues 164-166 (KKA) are Cytoplasmic-facing.

It belongs to the DsbB family.

Its subcellular location is the cell inner membrane. Functionally, required for disulfide bond formation in some periplasmic proteins. Acts by oxidizing the DsbA protein. The protein is Disulfide bond formation protein B of Methylobacillus flagellatus (strain ATCC 51484 / DSM 6875 / VKM B-1610 / KT).